The following is a 371-amino-acid chain: Regulatory protein RapK (371 aa).

TPR repeat units lie at residues glutamate 7 to methionine 42, glutamate 93 to glutamate 130, alanine 175 to threonine 208, alanine 215 to leucine 248, isoleucine 254 to lysine 290, and aspartate 331 to methionine 364.

This sequence belongs to the Rap family.

The protein localises to the cytoplasm. Its activity is regulated as follows. Inhibited by PhrK, which prevents RapK-ComA interaction. In terms of biological role, involved in the regulation of genetic competence development. Inhibits the activity of ComA, a transcriptional factor that regulates the development of genetic competence. Likely affects the activity of additional regulators, in particular Spo0A. In Bacillus subtilis (strain 168), this protein is Regulatory protein RapK (rapK).